A 253-amino-acid chain; its full sequence is 5'-nucleotidase SurE (253 aa).

A divalent metal cation contacts are provided by Asp8, Asp9, Ser40, and Asn92.

Belongs to the SurE nucleotidase family. Requires a divalent metal cation as cofactor.

Its subcellular location is the cytoplasm. It catalyses the reaction a ribonucleoside 5'-phosphate + H2O = a ribonucleoside + phosphate. Its function is as follows. Nucleotidase that shows phosphatase activity on nucleoside 5'-monophosphates. The protein is 5'-nucleotidase SurE of Hyphomonas neptunium (strain ATCC 15444).